Consider the following 555-residue polypeptide: CTP synthase (555 aa).

The interval 1 to 265 (MTRYIFITGG…GNRVCEKLNI (265 aa)) is amidoligase domain. Ser-13 lines the CTP pocket. UTP is bound at residue Ser-13. ATP is bound by residues 14–19 (SLGKGI) and Asp-71. Asp-71 and Glu-139 together coordinate Mg(2+). CTP-binding positions include 146–148 (DIE), 186–191 (KTKPTQ), and Lys-222. UTP-binding positions include 186-191 (KTKPTQ) and Lys-222. The region spanning 290–541 (TVAVVGKYVD…IKAGLAAKEA (252 aa)) is the Glutamine amidotransferase type-1 domain. Position 351 (Gly-351) interacts with L-glutamine. The Nucleophile; for glutamine hydrolysis role is filled by Cys-378. L-glutamine contacts are provided by residues 379-382 (LGMQ), Glu-402, and Arg-469. Catalysis depends on residues His-514 and Glu-516.

It belongs to the CTP synthase family. Homotetramer.

It catalyses the reaction UTP + L-glutamine + ATP + H2O = CTP + L-glutamate + ADP + phosphate + 2 H(+). The catalysed reaction is L-glutamine + H2O = L-glutamate + NH4(+). The enzyme catalyses UTP + NH4(+) + ATP = CTP + ADP + phosphate + 2 H(+). It participates in pyrimidine metabolism; CTP biosynthesis via de novo pathway; CTP from UDP: step 2/2. Its activity is regulated as follows. Allosterically activated by GTP, when glutamine is the substrate; GTP has no effect on the reaction when ammonia is the substrate. The allosteric effector GTP functions by stabilizing the protein conformation that binds the tetrahedral intermediate(s) formed during glutamine hydrolysis. Inhibited by the product CTP, via allosteric rather than competitive inhibition. In terms of biological role, catalyzes the ATP-dependent amination of UTP to CTP with either L-glutamine or ammonia as the source of nitrogen. Regulates intracellular CTP levels through interactions with the four ribonucleotide triphosphates. This is CTP synthase from Coxiella burnetii (strain RSA 493 / Nine Mile phase I).